Reading from the N-terminus, the 343-residue chain is GDSL esterase/lipase EXL6 (343 aa).

The N-terminal stretch at 1 to 21 (MFRGKIFVLSLFSIYVLSSAA) is a signal peptide. Asparagine 24 carries an N-linked (GlcNAc...) asparagine glycan. Serine 36 functions as the Nucleophile in the catalytic mechanism. Active-site residues include aspartate 318 and histidine 321.

It belongs to the 'GDSL' lipolytic enzyme family. As to expression, flower buds and pollen.

Its subcellular location is the secreted. The protein localises to the extracellular space. The protein resides in the extracellular matrix. It is found in the pollen coat. Functionally, required for the formation of pollen coats and male fertility. The sequence is that of GDSL esterase/lipase EXL6 (EXL6) from Arabidopsis thaliana (Mouse-ear cress).